The chain runs to 170 residues: uncharacterized protein (170 aa).

The next 5 membrane-spanning stretches (helical) occupy residues 21–41 (NISLFGCLLVLSAGIIFAAVL), 55–75 (AYTSVSIVLGTITTLPFTLLL), 86–106 (TGIAGLLYLAIGCSWLAYWLW), 117–137 (ISGVLVALEPLFGILFAVSLL), and 143–163 (FSAALGITIIMLATLGSTLLP). The 127-residue stretch at 35 to 161 (IIFAAVLRWT…IMLATLGSTL (127 aa)) folds into the EamA domain.

This sequence belongs to the EamA transporter family.

It localises to the cell membrane. This is an uncharacterized protein from Haemophilus influenzae (strain ATCC 51907 / DSM 11121 / KW20 / Rd).